A 129-amino-acid polypeptide reads, in one-letter code: Small ribosomal subunit protein uS9 (129 aa).

Residues 107–129 are disordered; it reads SRTVERKKYGRRKARRSPQFSKR. Basic residues predominate over residues 114 to 129; it reads KYGRRKARRSPQFSKR.

Belongs to the universal ribosomal protein uS9 family.

In Campylobacter jejuni subsp. jejuni serotype O:23/36 (strain 81-176), this protein is Small ribosomal subunit protein uS9.